The following is a 69-amino-acid chain: Large ribosomal subunit protein uL29 (69 aa).

Belongs to the universal ribosomal protein uL29 family.

The protein is Large ribosomal subunit protein uL29 of Oenococcus oeni (strain ATCC BAA-331 / PSU-1).